The following is a 347-amino-acid chain: Succinylglutamate desuccinylase (347 aa).

Residues H64, E67, and H159 each coordinate Zn(2+). E222 is an active-site residue.

Belongs to the AspA/AstE family. Succinylglutamate desuccinylase subfamily. Zn(2+) serves as cofactor.

The enzyme catalyses N-succinyl-L-glutamate + H2O = L-glutamate + succinate. It participates in amino-acid degradation; L-arginine degradation via AST pathway; L-glutamate and succinate from L-arginine: step 5/5. In terms of biological role, transforms N(2)-succinylglutamate into succinate and glutamate. In Burkholderia cenocepacia (strain ATCC BAA-245 / DSM 16553 / LMG 16656 / NCTC 13227 / J2315 / CF5610) (Burkholderia cepacia (strain J2315)), this protein is Succinylglutamate desuccinylase.